A 515-amino-acid chain; its full sequence is tRNA-2-methylthio-N(6)-dimethylallyladenosine synthase (515 aa).

One can recognise an MTTase N-terminal domain in the interval 25–140; that stretch reads KTYQVRTFGC…LPALLNRARH (116 aa). [4Fe-4S] cluster is bound by residues Cys34, Cys69, Cys103, Cys177, Cys181, and Cys184. The Radical SAM core domain occupies 163–393; that stretch reads RDSVYAGWVS…TALQDRIAAE (231 aa). Residues 396–466 form the TRAM domain; that stretch reads AKQLGRKVEV…AFHLVADPAG (71 aa). Residues 482–515 form a disordered region; the sequence is DRSQADSCGVPAAGAASGKAGVSLGMPSLPTRRA. The span at 490–506 shows a compositional bias: low complexity; sequence GVPAAGAASGKAGVSLG.

This sequence belongs to the methylthiotransferase family. MiaB subfamily. As to quaternary structure, monomer. Requires [4Fe-4S] cluster as cofactor.

It localises to the cytoplasm. The enzyme catalyses N(6)-dimethylallyladenosine(37) in tRNA + (sulfur carrier)-SH + AH2 + 2 S-adenosyl-L-methionine = 2-methylsulfanyl-N(6)-dimethylallyladenosine(37) in tRNA + (sulfur carrier)-H + 5'-deoxyadenosine + L-methionine + A + S-adenosyl-L-homocysteine + 2 H(+). Catalyzes the methylthiolation of N6-(dimethylallyl)adenosine (i(6)A), leading to the formation of 2-methylthio-N6-(dimethylallyl)adenosine (ms(2)i(6)A) at position 37 in tRNAs that read codons beginning with uridine. The protein is tRNA-2-methylthio-N(6)-dimethylallyladenosine synthase of Paenarthrobacter aurescens (strain TC1).